Here is a 111-residue protein sequence, read N- to C-terminus: T cell receptor beta variable 20-1 (111 aa).

The first 15 residues, 1 to 15 (MLLLLLLLGPGSGLG), serve as a signal peptide directing secretion. Positions 16 to 111 (AVVSQHPSRV…DSSFYICSAR (96 aa)) constitute an Ig-like domain. Residues cysteine 37 and cysteine 108 are joined by a disulfide bond.

Alpha-beta TR is a heterodimer composed of an alpha and beta chain; disulfide-linked. The alpha-beta TR is associated with the transmembrane signaling CD3 coreceptor proteins to form the TR-CD3 (TcR or TCR). The assembly of alpha-beta TR heterodimers with CD3 occurs in the endoplasmic reticulum where a single alpha-beta TR heterodimer associates with one CD3D-CD3E heterodimer, one CD3G-CD3E heterodimer and one CD247 homodimer forming a stable octameric structure. CD3D-CD3E and CD3G-CD3E heterodimers preferentially associate with TR alpha and TR beta chains, respectively. The association of the CD247 homodimer is the last step of TcR assembly in the endoplasmic reticulum and is required for transport to the cell surface.

Its subcellular location is the cell membrane. Functionally, v region of the variable domain of T cell receptor (TR) beta chain that participates in the antigen recognition. Alpha-beta T cell receptors are antigen specific receptors which are essential to the immune response and are present on the cell surface of T lymphocytes. Recognize peptide-major histocompatibility (MH) (pMH) complexes that are displayed by antigen presenting cells (APC), a prerequisite for efficient T cell adaptive immunity against pathogens. Binding of alpha-beta TR to pMH complex initiates TR-CD3 clustering on the cell surface and intracellular activation of LCK that phosphorylates the ITAM motifs of CD3G, CD3D, CD3E and CD247 enabling the recruitment of ZAP70. In turn ZAP70 phosphorylates LAT, which recruits numerous signaling molecules to form the LAT signalosome. The LAT signalosome propagates signal branching to three major signaling pathways, the calcium, the mitogen-activated protein kinase (MAPK) kinase and the nuclear factor NF-kappa-B (NF-kB) pathways, leading to the mobilization of transcription factors that are critical for gene expression and essential for T cell growth and differentiation. The T cell repertoire is generated in the thymus, by V-(D)-J rearrangement. This repertoire is then shaped by intrathymic selection events to generate a peripheral T cell pool of self-MH restricted, non-autoaggressive T cells. Post-thymic interaction of alpha-beta TR with the pMH complexes shapes TR structural and functional avidity. The chain is T cell receptor beta variable 20-1 from Homo sapiens (Human).